The chain runs to 331 residues: Phenylalanine--tRNA ligase alpha subunit (331 aa).

Glutamate 252 serves as a coordination point for Mg(2+).

Belongs to the class-II aminoacyl-tRNA synthetase family. Phe-tRNA synthetase alpha subunit type 1 subfamily. Tetramer of two alpha and two beta subunits. Mg(2+) is required as a cofactor.

It is found in the cytoplasm. The catalysed reaction is tRNA(Phe) + L-phenylalanine + ATP = L-phenylalanyl-tRNA(Phe) + AMP + diphosphate + H(+). The sequence is that of Phenylalanine--tRNA ligase alpha subunit from Stenotrophomonas maltophilia (strain R551-3).